An 84-amino-acid chain; its full sequence is Small ribosomal subunit protein bS16 (84 aa).

It belongs to the bacterial ribosomal protein bS16 family.

The protein is Small ribosomal subunit protein bS16 of Cupriavidus pinatubonensis (strain JMP 134 / LMG 1197) (Cupriavidus necator (strain JMP 134)).